Here is an 824-residue protein sequence, read N- to C-terminus: Phenylalanine--tRNA ligase beta subunit (824 aa).

Residues 39–153 (SEQAKNVVIG…NIPPIGSNAV (115 aa)) enclose the tRNA-binding domain. A B5 domain is found at 414-507 (KKSISVNLRM…RLIGYDNFDS (94 aa)). Mg(2+) contacts are provided by Asp-485, Asp-491, Glu-494, and Glu-495. The FDX-ACB domain maps to 730–823 (PTVPYMERDI…LKEKIKAELR (94 aa)).

The protein belongs to the phenylalanyl-tRNA synthetase beta subunit family. Type 1 subfamily. Tetramer of two alpha and two beta subunits. It depends on Mg(2+) as a cofactor.

The protein localises to the cytoplasm. The enzyme catalyses tRNA(Phe) + L-phenylalanine + ATP = L-phenylalanyl-tRNA(Phe) + AMP + diphosphate + H(+). The protein is Phenylalanine--tRNA ligase beta subunit of Prochlorococcus marinus (strain NATL2A).